A 344-amino-acid polypeptide reads, in one-letter code: Small ribosomal subunit protein mS38 (344 aa).

3 disordered regions span residues 1-27 (MIPQ…ASSA), 43-101 (ALQK…SVPS), and 325-344 (KKYK…QDRL). Residues 51–74 (SSKPSSPDDGSSRAFAARASVPAA) show a composition bias toward low complexity. Residues 325–338 (KKYKKLMRRTRNER) show a composition bias toward basic residues.

It belongs to the mitochondrion-specific ribosomal protein mS38 family. As to quaternary structure, component of the mitochondrial small ribosomal subunit (mt-SSU). Mature N.crassa 74S mitochondrial ribosomes consist of a small (37S) and a large (54S) subunit. The 37S small subunit contains a 16S ribosomal RNA (16S mt-rRNA) and 32 different proteins. The 54S large subunit contains a 23S rRNA (23S mt-rRNA) and 42 different proteins.

It localises to the mitochondrion. In terms of biological role, component of the mitochondrial ribosome (mitoribosome), a dedicated translation machinery responsible for the synthesis of mitochondrial genome-encoded proteins, including at least some of the essential transmembrane subunits of the mitochondrial respiratory chain. The mitoribosomes are attached to the mitochondrial inner membrane and translation products are cotranslationally integrated into the membrane. The sequence is that of Small ribosomal subunit protein mS38 (cox24) from Neurospora crassa (strain ATCC 24698 / 74-OR23-1A / CBS 708.71 / DSM 1257 / FGSC 987).